A 498-amino-acid chain; its full sequence is ATP synthase subunit beta, chloroplastic (498 aa).

172 to 179 (GGAGVGKT) contributes to the ATP binding site.

It belongs to the ATPase alpha/beta chains family. As to quaternary structure, F-type ATPases have 2 components, CF(1) - the catalytic core - and CF(0) - the membrane proton channel. CF(1) has five subunits: alpha(3), beta(3), gamma(1), delta(1), epsilon(1). CF(0) has four main subunits: a(1), b(1), b'(1) and c(9-12).

The protein resides in the plastid. It is found in the chloroplast thylakoid membrane. The enzyme catalyses ATP + H2O + 4 H(+)(in) = ADP + phosphate + 5 H(+)(out). Produces ATP from ADP in the presence of a proton gradient across the membrane. The catalytic sites are hosted primarily by the beta subunits. This is ATP synthase subunit beta, chloroplastic from Myristica fragrans (Nutmeg).